The chain runs to 181 residues: MPLVRLSQLVPLLLKGKTSLAHQFVEGEFLEDYDPTVENTYSKIVTVGKDEFHLHLVDTAGQDEYSILPYSFIIGVHGYVLVYSVTSLHSFQVIESLYQKLHEGHGKTRLPVVLVGNKADLSPDREVQAVEGKKLAASWGATFMESSARNNQLTQGIFTKVIQEIARVENSYGQERRCHLM.

Residues 30 to 36 (LEDYDPT), glycine 61, 117 to 120 (NKAD), and 147 to 148 (SA) each bind GTP. The Effector region motif lies at 33–41 (YDPTVENTY). Threonine 36 is a Mg(2+) binding site. Cysteine 178 bears the Cysteine methyl ester mark. Residue cysteine 178 is the site of S-farnesyl cysteine attachment. Positions 179-181 (HLM) are cleaved as a propeptide — removed in mature form.

The protein belongs to the small GTPase superfamily. Rheb family. As to quaternary structure, interacts with MTOR.

It localises to the endomembrane system. It is found in the cytoplasm. It carries out the reaction GTP + H2O = GDP + phosphate + H(+). In terms of biological role, binds GTP and exhibits intrinsic GTPase activity. May activate NF-kappa-B-mediated gene transcription. Promotes signal transduction through MTOR, activates RPS6KB1, and is a downstream target of the small GTPase-activating proteins TSC1 and TSC2. This Bos taurus (Bovine) protein is GTPase RhebL1 (RHEBL1).